A 185-amino-acid polypeptide reads, in one-letter code: Ribosome-recycling factor (185 aa).

Belongs to the RRF family.

Its subcellular location is the cytoplasm. Functionally, responsible for the release of ribosomes from messenger RNA at the termination of protein biosynthesis. May increase the efficiency of translation by recycling ribosomes from one round of translation to another. The chain is Ribosome-recycling factor from Methylobacillus flagellatus (strain ATCC 51484 / DSM 6875 / VKM B-1610 / KT).